The sequence spans 511 residues: N-acetylgalactosamine-6-O-sulfatase (511 aa).

S83 bears the 3-oxoalanine (Ser) mark.

This sequence belongs to the sulfatase family. The conversion to 3-oxoalanine (also known as C-formylglycine, FGly), of a serine or cysteine residue in prokaryotes and of a cysteine residue in eukaryotes, is critical for catalytic activity.

In terms of biological role, exosulfatase involved in the degradation of the glycosaminoglycans (GAGs) chondroitin sulfate (CS) and dermatan sulfate (DS). Catalyzes the hydrolysis of the 6-sulfate groups of the N-acetyl-D-galactosamine 6-sulfate units. GAG-specific sulfatases play a key role in the persistence of the major human gut symbiont B.thetaiotaomicron in the host gastrointestinal tract. The sequence is that of N-acetylgalactosamine-6-O-sulfatase from Bacteroides thetaiotaomicron (strain ATCC 29148 / DSM 2079 / JCM 5827 / CCUG 10774 / NCTC 10582 / VPI-5482 / E50).